Consider the following 176-residue polypeptide: Inner membrane-spanning protein YciB (176 aa).

A run of 5 helical transmembrane segments spans residues 22–42, 50–70, 81–101, 121–141, and 149–169; these read IYYA…YTWL, VALI…YYHN, IYSL…KPLI, IAWA…AFWL, and FKVF…GIYI.

It belongs to the YciB family.

Its subcellular location is the cell inner membrane. Functionally, plays a role in cell envelope biogenesis, maintenance of cell envelope integrity and membrane homeostasis. This is Inner membrane-spanning protein YciB from Sodalis glossinidius (strain morsitans).